We begin with the raw amino-acid sequence, 636 residues long: 1-deoxy-D-xylulose-5-phosphate synthase 2 (636 aa).

Thiamine diphosphate-binding positions include His78 and 119 to 121 (AHS). Asp150 provides a ligand contact to Mg(2+). Thiamine diphosphate-binding positions include 151 to 152 (GS), Asn179, Tyr288, and Glu370. Asn179 provides a ligand contact to Mg(2+).

It belongs to the transketolase family. DXPS subfamily. As to quaternary structure, homodimer. Requires Mg(2+) as cofactor. It depends on thiamine diphosphate as a cofactor.

The enzyme catalyses D-glyceraldehyde 3-phosphate + pyruvate + H(+) = 1-deoxy-D-xylulose 5-phosphate + CO2. The protein operates within metabolic intermediate biosynthesis; 1-deoxy-D-xylulose 5-phosphate biosynthesis; 1-deoxy-D-xylulose 5-phosphate from D-glyceraldehyde 3-phosphate and pyruvate: step 1/1. Its function is as follows. Catalyzes the acyloin condensation reaction between C atoms 2 and 3 of pyruvate and glyceraldehyde 3-phosphate to yield 1-deoxy-D-xylulose-5-phosphate (DXP). The protein is 1-deoxy-D-xylulose-5-phosphate synthase 2 of Jannaschia sp. (strain CCS1).